A 382-amino-acid chain; its full sequence is 1-deoxy-D-xylulose 5-phosphate reductoisomerase (382 aa).

Residues serine 10, glycine 11, serine 12, isoleucine 13, glycine 36, lysine 37, asparagine 38, and asparagine 121 each contribute to the NADPH site. Lysine 122 serves as a coordination point for 1-deoxy-D-xylulose 5-phosphate. NADPH is bound at residue glutamate 123. Position 147 (aspartate 147) interacts with Mn(2+). 1-deoxy-D-xylulose 5-phosphate-binding residues include serine 148, glutamate 149, serine 173, and histidine 196. Glutamate 149 contributes to the Mn(2+) binding site. An NADPH-binding site is contributed by glycine 202. The 1-deoxy-D-xylulose 5-phosphate site is built by serine 209, asparagine 214, lysine 215, and glutamate 218. Glutamate 218 serves as a coordination point for Mn(2+).

Belongs to the DXR family. Requires Mg(2+) as cofactor. Mn(2+) serves as cofactor.

The catalysed reaction is 2-C-methyl-D-erythritol 4-phosphate + NADP(+) = 1-deoxy-D-xylulose 5-phosphate + NADPH + H(+). It functions in the pathway isoprenoid biosynthesis; isopentenyl diphosphate biosynthesis via DXP pathway; isopentenyl diphosphate from 1-deoxy-D-xylulose 5-phosphate: step 1/6. Its function is as follows. Catalyzes the NADPH-dependent rearrangement and reduction of 1-deoxy-D-xylulose-5-phosphate (DXP) to 2-C-methyl-D-erythritol 4-phosphate (MEP). In Geobacillus kaustophilus (strain HTA426), this protein is 1-deoxy-D-xylulose 5-phosphate reductoisomerase.